We begin with the raw amino-acid sequence, 89 residues long: Tuberculin-active protein (89 aa).

Residues C27 and C59 are joined by a disulfide bond. The interval 61 to 89 (DGGSESEGKNGSQMRLIADVGPESATVAK) is disordered.

In terms of biological role, tuberculin is the soluble, proteinaceous cell substance of the bacterium, to which infected animals become hypersensitive and react characteristically to dermal injections. In Mycobacterium tuberculosis, this protein is Tuberculin-active protein.